Here is a 378-residue protein sequence, read N- to C-terminus: C-X-C chemokine receptor type 3-2 (378 aa).

Residues 1–47 (MDNSTTAAEVSAPTDYDYNSTSYDDDNPYAAPCSLTETWNFLGRFAP) lie on the Extracellular side of the membrane. N-linked (GlcNAc...) asparagine glycosylation is found at asparagine 3 and asparagine 19. The chain crosses the membrane as a helical span at residues 48–68 (VAYILVFILALVGNILVLCVI). The Cytoplasmic segment spans residues 69–86 (RRYRQSRHSPCSFSLTDT). The chain crosses the membrane as a helical span at residues 87–107 (FLLHLAVSDLLLAATLPFFAV). The Extracellular segment spans residues 108 to 121 (EWISEWVFGKVMCK). A disulfide bond links cysteine 120 and cysteine 199. Residues 122–142 (ITGALFSLNVYCGVLFLACIS) traverse the membrane as a helical segment. Topologically, residues 143 to 164 (FDRYLAIVHAINISWRRKTCHA) are cytoplasmic. The helical transmembrane segment at 165-185 (QLACAFIWVICLGLSMVDMHF) threads the bilayer. Over 186 to 212 (RDLVEIPGMNRMVCQIVYSEQYSKQWQ) the chain is Extracellular. Residues 213–233 (IGMQLVSMVLGFILPLLVMLY) traverse the membrane as a helical segment. Topologically, residues 234-253 (CYLHIFKALCHATRRQKRRS) are cytoplasmic. Residues 254–274 (LRLIISLVIVFVISWAPYNAL) traverse the membrane as a helical segment. Over 275-304 (RMTDSLQMLGVIVKSCALNNVLDVGILVTE) the chain is Extracellular. A helical membrane pass occupies residues 305 to 325 (SLGLAHCALNPLLYGLVGVKF). At 326-378 (RRELAQMCKAALGPQGCLGLVGWANGRGSSTRRPTGSFSSVETENTSYFSVMA) the chain is on the cytoplasmic side.

The protein belongs to the G-protein coupled receptor 1 family.

It localises to the cell membrane. Receptor for the C-X-C chemokines cxcl11.1 and cxcl11.6. Promotes macrophage chemotaxis to sites of bacterial infection. The polypeptide is C-X-C chemokine receptor type 3-2 (Danio rerio (Zebrafish)).